The sequence spans 493 residues: ATP-dependent rRNA helicase RRP3 (493 aa).

2 stretches are compositionally biased toward basic and acidic residues: residues 26–42 (ALEN…KDSE) and 51–62 (ERPAKKQAKDEK). The segment at 26–68 (ALENQKKMQAASRKDSESDSSDEEVERPAKKQAKDEKVEEPEE) is disordered. The Q motif motif lies at 73–101 (ESFAQLNLVPELIQACQNLNFTKPTPIQA). A Helicase ATP-binding domain is found at 104–276 (IPPALAGSDV…RASLTNPVKC (173 aa)). Residue 117–124 (AQTGSGKT) participates in ATP binding. The DEAD box signature appears at 223 to 226 (DEAD). Positions 307 to 453 (LLNEFIGKTV…NIILTLRDSV (147 aa)) constitute a Helicase C-terminal domain. The disordered stretch occupies residues 467–493 (RNKEKQARGKGRRGRMMAKENMDREEK). The segment covering 483 to 493 (MAKENMDREEK) has biased composition (basic and acidic residues).

The protein belongs to the DEAD box helicase family. DDX47/RRP3 subfamily. In terms of assembly, interacts with the SSU processome.

Its subcellular location is the nucleus. The enzyme catalyses ATP + H2O = ADP + phosphate + H(+). Its function is as follows. ATP-dependent rRNA helicase required for pre-ribosomal RNA processing. Involved in the maturation of the 35S-pre-rRNA and to its cleavage to mature 18S rRNA. This is ATP-dependent rRNA helicase RRP3 from Candida glabrata (strain ATCC 2001 / BCRC 20586 / JCM 3761 / NBRC 0622 / NRRL Y-65 / CBS 138) (Yeast).